A 1518-amino-acid chain; its full sequence is Putative cellulose synthase 3 (1518 aa).

The tract at residues 1-731 is catalytic; it reads MYGTWFTTGK…EEKLEKQSFV (731 aa). Helical transmembrane passes span 24 to 44, 71 to 91, and 105 to 125; these read PVWVPVVLGVVLMAFVGSVRI, ITVFLMMLSLLVSLRYIVWRL, and LAVLLLLAEAYALMTLCLSYF. The tract at residues 144-237 is catalytic subdomain A; it reads QWPSVDVFVP…FAVIFDCDHV (94 aa). Catalysis depends on residues Asp-186 and Asp-330. The segment at 314-374 is catalytic subdomain B; it reads EAVMGIGGFA…GQRVRWARGM (61 aa). Helical transmembrane passes span 404–424, 428–448, 465–485, 514–534, and 543–563; these read FLFAIPRLTFLVSPLAFLFLG, IAASPLAISVYALPHIFHSVI, IYETSLALFLVRITIVTLLQP, ILAGVLCAALLRGVFGIVWQF, and FILNTLWVVISLIIVLASIAV. The region spanning 569–668 is the PilZ domain; that stretch reads QTRNAPRVSV…ERQVVSMVFG (100 aa). Positions 732-1518 are cyclic di-GMP binding domain; that stretch reads LKPVPRSARH…IARDDLTGEL (787 aa). The tract at residues 765 to 785 is disordered; sequence APSPDQSGVTAETPFGDSNTG. Over residues 768 to 785 the composition is skewed to polar residues; it reads PDQSGVTAETPFGDSNTG. The helical transmembrane segment at 1481-1501 threads the bilayer; that stretch reads ALYLAGLAGAGLAALGVWAWL.

The protein in the N-terminal section; belongs to the glycosyltransferase 2 family. In the C-terminal section; belongs to the AcsB/BcsB family.

The protein resides in the cell inner membrane. The enzyme catalyses [(1-&gt;4)-beta-D-glucosyl](n) + UDP-alpha-D-glucose = [(1-&gt;4)-beta-D-glucosyl](n+1) + UDP + H(+). The protein operates within glycan metabolism; bacterial cellulose biosynthesis. The polypeptide is Putative cellulose synthase 3 (bcsABII-B) (Komagataeibacter xylinus (Gluconacetobacter xylinus)).